A 534-amino-acid chain; its full sequence is Kelch repeat and BTB domain-containing protein 4 (534 aa).

The 68-residue stretch at 61 to 128 (ADVTISVEGR…IYHGTVKLRA (68 aa)) folds into the BTB domain. The BACK domain maps to 163–255 (CLQVMWLADR…SLKEIGENVH (93 aa)). 5 Kelch repeats span residues 255–301 (HIYL…KHGG), 302–344 (DLYV…SVPG), 347–394 (AIYS…NLNG), 396–446 (IYLL…VHKD), and 448–497 (VFIV…VFRD).

In terms of assembly, component of the BCR(KBTBD4) E3 ubiquitin ligase complex, at least composed of CUL3, KBTBD4 and RBX1.

Functionally, substrate-specific adapter of a BCR (BTB-CUL3-RBX1) E3 ubiquitin ligase complex which targets CoREST corepressor complex components RCOR1, KDM1A/LSD1 and HDAC2 for proteasomal degradation. RCOR1 is likely to be the primary target while degradation of KDM1A and HDAC2 is likely due to their association with RCOR1. Also targets RCOR3, MIER2 and MIER3 for proteasomal degradation as well as associated proteins ZNF217 and RREB1. Degradation is dependent on the presence of an ELM2 domain in the target proteins. The protein is Kelch repeat and BTB domain-containing protein 4 (Kbtbd4) of Mus musculus (Mouse).